We begin with the raw amino-acid sequence, 160 residues long: Transcription elongation factor GreA (160 aa).

A coiled-coil region spans residues Q4–H70.

Belongs to the GreA/GreB family.

Its function is as follows. Necessary for efficient RNA polymerase transcription elongation past template-encoded arresting sites. The arresting sites in DNA have the property of trapping a certain fraction of elongating RNA polymerases that pass through, resulting in locked ternary complexes. Cleavage of the nascent transcript by cleavage factors such as GreA or GreB allows the resumption of elongation from the new 3'terminus. GreA releases sequences of 2 to 3 nucleotides. The sequence is that of Transcription elongation factor GreA from Staphylococcus carnosus (strain TM300).